A 337-amino-acid polypeptide reads, in one-letter code: Endochitinase 37 (337 aa).

The signal sequence occupies residues 1-25; the sequence is MTRLLDASFLLLPVIASTLFGTASA. The region spanning 38–337 is the GH18 domain; that stretch reads KVLQGYWENW…GSKNWTFGDN (300 aa). The active-site Proton donor is the glutamate 160. Asparagine 331 carries an N-linked (GlcNAc...) asparagine glycan.

This sequence belongs to the glycosyl hydrolase 18 family. Chitinase class V subfamily. In terms of assembly, monomer.

Its subcellular location is the secreted. The catalysed reaction is Random endo-hydrolysis of N-acetyl-beta-D-glucosaminide (1-&gt;4)-beta-linkages in chitin and chitodextrins.. Secreted chitinase involved in the degradation of chitin, a component of the cell walls of fungi and exoskeletal elements of some animals (including worms and arthropods). Plays a morphogenetic role during apical growth, cell division and differentiation (cell wall morphogenesis). May be involved in the degradation and further assimilation of phytopathogenic fungi, namely mycoparasitism, the major mechanism accounting for the antagonistic activity against phytopathogenic fungi displayed by Trichoderma. The polypeptide is Endochitinase 37 (chit37) (Trichoderma harzianum (Hypocrea lixii)).